Reading from the N-terminus, the 241-residue chain is Mitochondrial inner membrane protease ATP23 (241 aa).

Residue His-141 participates in a divalent metal cation binding. Glu-142 is a catalytic residue. A divalent metal cation is bound at residue His-145.

Belongs to the peptidase M76 family.

The protein localises to the mitochondrion inner membrane. Has a dual role in the assembly of mitochondrial ATPase. Acts as a protease that removes N-terminal residues of mitochondrial ATPase CF(0) subunit 6 at the intermembrane space side. Also involved in the correct assembly of the membrane-embedded ATPase CF(0) particle, probably mediating association of subunit 6 with the subunit 9 ring. The chain is Mitochondrial inner membrane protease ATP23 (ATP23) from Lodderomyces elongisporus (strain ATCC 11503 / CBS 2605 / JCM 1781 / NBRC 1676 / NRRL YB-4239) (Yeast).